The chain runs to 419 residues: UDP-N-acetylglucosamine 1-carboxyvinyltransferase (419 aa).

22 to 23 (KN) contributes to the phosphoenolpyruvate binding site. Residue Arg-91 participates in UDP-N-acetyl-alpha-D-glucosamine binding. The Proton donor role is filled by Cys-115. The residue at position 115 (Cys-115) is a 2-(S-cysteinyl)pyruvic acid O-phosphothioketal. UDP-N-acetyl-alpha-D-glucosamine-binding positions include 120 to 124 (RPVDL), 160 to 163 (KVSV), Asp-305, and Val-327.

This sequence belongs to the EPSP synthase family. MurA subfamily.

It is found in the cytoplasm. The catalysed reaction is phosphoenolpyruvate + UDP-N-acetyl-alpha-D-glucosamine = UDP-N-acetyl-3-O-(1-carboxyvinyl)-alpha-D-glucosamine + phosphate. It functions in the pathway cell wall biogenesis; peptidoglycan biosynthesis. Functionally, cell wall formation. Adds enolpyruvyl to UDP-N-acetylglucosamine. The sequence is that of UDP-N-acetylglucosamine 1-carboxyvinyltransferase from Escherichia coli O157:H7.